Here is a 3084-residue protein sequence, read N- to C-terminus: Protein prune homolog 2 (3084 aa).

Residue Met1 is modified to N-acetylmethionine. Positions 109-111 (GSH) match the DHH motif motif. Disordered regions lie at residues 394–417 (QPSS…QADG), 430–465 (TIRS…PGFD), 500–536 (ASEQ…PKGL), 672–733 (EQES…QKEE), 811–837 (KNTW…MGQS), 861–907 (EIWG…KATG), 947–1080 (SASN…DDPS), 1224–1316 (NMPS…GQSE), 1338–1395 (SGVN…LEVE), 1502–1543 (MNST…DLHD), 1600–1652 (GFGK…TTKR), 1776–1799 (ETGT…DPDK), 1836–1886 (GELE…GDKS), 1961–1980 (DENG…QENQ), 2071–2196 (ILTH…NPEV), 2410–2782 (MLLS…SHPR), 2797–2816 (QSEG…EIDI), and 2825–2859 (DEAD…AEEE). Residues 501–511 (SEQSQPSSHSA) are compositionally biased toward polar residues. Composition is skewed to basic and acidic residues over residues 682 to 696 (PWKD…RRTS) and 723 to 733 (GNKEAQDQKEE). 2 stretches are compositionally biased toward polar residues: residues 811-828 (KNTW…SGQE) and 865-891 (KNNS…NNSK). Residues 962 to 975 (TNYSTSDSYTSPTY) are compositionally biased toward low complexity. The segment covering 977 to 999 (GDEKEIANKPVDKDNGFEAKDAE) has biased composition (basic and acidic residues). Residues 1009-1019 (ATSSQQSQRNR) are compositionally biased toward polar residues. Residues 1034–1063 (HTEDKPEGNDAHHPDSDALKTEHAEDKNAS) show a composition bias toward basic and acidic residues. The segment covering 1071 to 1080 (SSPSSYDDPS) has biased composition (low complexity). Residues 1248–1261 (SPRHSNGKDSHMLE) are compositionally biased toward basic and acidic residues. Residues 1265 to 1294 (LSESGGLTSQPVNQDTWGDSQGDTASSVTG) are compositionally biased toward polar residues. The span at 1350–1366 (KPRDQEFSSSDAFEHQD) shows a compositional bias: basic and acidic residues. Residues 1368 to 1378 (SSASGKISSLS) show a composition bias toward low complexity. 3 stretches are compositionally biased toward polar residues: residues 1779–1792 (TMDT…STEA), 1854–1869 (PIQN…STNP), and 1965–1980 (CVST…QENQ). A compositionally biased stretch (basic and acidic residues) spans 2089–2103 (VCHDSEGEQKMEKHT). A compositionally biased stretch (low complexity) spans 2162 to 2174 (SSKPASSRSSPEP). Composition is skewed to basic and acidic residues over residues 2416 to 2428 (PDHR…ETNI), 2506 to 2525 (KQTE…EDHQ), and 2535 to 2553 (SHEK…RENI). The span at 2569–2584 (PETQLSGTPDTCQSEF) shows a compositional bias: polar residues. The segment covering 2595–2606 (RMSSSSNHESAS) has biased composition (low complexity). Positions 2607 to 2617 (LENPAQDQSWM) are enriched in polar residues. Residues 2653-2664 (KGPKSQVLERNK) are compositionally biased toward basic and acidic residues. Positions 2806–2816 (DNLDSPDEIDI) are enriched in acidic residues. Over residues 2840 to 2849 (ANKSSGQESE) the composition is skewed to polar residues. One can recognise a CRAL-TRIO domain in the interval 2879 to 3040 (DMKVIEPYRR…SIIKYDEEKS (162 aa)).

The protein belongs to the PPase class C family. Prune subfamily.

The protein resides in the cytoplasm. Its function is as follows. May play an important role in regulating differentiation, survival and aggressiveness of the tumor cells. This is Protein prune homolog 2 (Prune2) from Mus musculus (Mouse).